The sequence spans 371 residues: Macrolide export protein MacA (371 aa).

The Cytoplasmic segment spans residues 1–10 (MKKRKTVKKR). The chain crosses the membrane as a helical span at residues 11 to 31 (YVIALVIVIAGLITLWRILNA). Topologically, residues 32–371 (PVPTYQTLIV…IGEAKPGAAQ (340 aa)) are periplasmic. The stretch at 92-137 (IDPEQAENQIKEVEATLMELRAQRQQAEAELKLARVTYSRQQRLAQ) forms a coiled coil.

Belongs to the membrane fusion protein (MFP) (TC 8.A.1) family. Homohexamer. Part of the tripartite efflux system MacAB-TolC, which is composed of an inner membrane transporter, MacB, a periplasmic membrane fusion protein, MacA, and an outer membrane component, TolC. The complex forms a large protein conduit and can translocate molecules across both the inner and outer membranes. MacA interacts with MacB and TolC.

Its subcellular location is the cell inner membrane. Functionally, part of the tripartite efflux system MacAB-TolC. MacA stimulates the ATPase activity of MacB by promoting the closed ATP-bound state of MacB, increases the capacity of MacB to bind macrolides such as erythromycin, and provides a physical link between MacB and TolC. Confers resistance against macrolides. This is Macrolide export protein MacA (macA) from Escherichia coli O157:H7.